Consider the following 196-residue polypeptide: Imidazoleglycerol-phosphate dehydratase (196 aa).

This sequence belongs to the imidazoleglycerol-phosphate dehydratase family.

The protein resides in the cytoplasm. The enzyme catalyses D-erythro-1-(imidazol-4-yl)glycerol 3-phosphate = 3-(imidazol-4-yl)-2-oxopropyl phosphate + H2O. It participates in amino-acid biosynthesis; L-histidine biosynthesis; L-histidine from 5-phospho-alpha-D-ribose 1-diphosphate: step 6/9. The chain is Imidazoleglycerol-phosphate dehydratase from Dehalococcoides mccartyi (strain CBDB1).